Here is a 1094-residue protein sequence, read N- to C-terminus: RecBCD enzyme subunit RecB (1094 aa).

Residues 1 to 326 (MDRFELLGPL…YTLGVNWRSD (326 aa)) enclose the UvrD-like helicase ATP-binding domain. Residues 1–713 (MDRFELLGPL…LLRGRRPGQS (713 aa)) form a DNA-binding and helicase activity, interacts with RecC region. ATP is bound at residue 21-28 (ASAGTGKT). Residues 357–613 (AGHRLASAPR…QIMTVFVAKG (257 aa)) form the UvrD-like helicase C-terminal domain. The segment at 775–1094 (TWRRTSYSDL…DLLDRGRLQS (320 aa)) is nuclease activity, interacts with RecD and RecA. His838, Asp975, and Asp989 together coordinate Mg(2+). Asp989 (for nuclease activity) is an active-site residue.

This sequence belongs to the helicase family. UvrD subfamily. Heterotrimer of RecB, RecC and RecD. All subunits contribute to DNA-binding. Interacts with RecA. Requires Mg(2+) as cofactor.

The catalysed reaction is Exonucleolytic cleavage (in the presence of ATP) in either 5'- to 3'- or 3'- to 5'-direction to yield 5'-phosphooligonucleotides.. It catalyses the reaction Couples ATP hydrolysis with the unwinding of duplex DNA by translocating in the 3'-5' direction.. The enzyme catalyses ATP + H2O = ADP + phosphate + H(+). Its function is as follows. A helicase/nuclease that prepares dsDNA breaks (DSB) for recombinational DNA repair. Binds to DSBs and unwinds DNA via a highly rapid and processive ATP-dependent bidirectional helicase activity. In the holoenzyme this subunit contributes ATPase, 3'-5' helicase, exonuclease activity and loads RecA onto ssDNA. Unlike the case in E.coli, suppresses RecA-dependent homologous recombination, is instead required for single-strand annealing pathway repair of DSB. The chain is RecBCD enzyme subunit RecB from Mycobacterium tuberculosis (strain CDC 1551 / Oshkosh).